Consider the following 381-residue polypeptide: Homoserine O-succinyltransferase (381 aa).

Positions 45 to 360 constitute an AB hydrolase-1 domain; that stretch reads NAVLVCHALN…PHGHDAFLLD (316 aa). Serine 151 (nucleophile) is an active-site residue. Position 221 (arginine 221) interacts with substrate. Active-site residues include aspartate 321 and histidine 354. Aspartate 355 is a binding site for substrate.

Belongs to the AB hydrolase superfamily. MetX family. Homodimer.

The protein localises to the cytoplasm. It catalyses the reaction L-homoserine + succinyl-CoA = O-succinyl-L-homoserine + CoA. The protein operates within amino-acid biosynthesis; L-methionine biosynthesis via de novo pathway; O-succinyl-L-homoserine from L-homoserine: step 1/1. In terms of biological role, transfers a succinyl group from succinyl-CoA to L-homoserine, forming succinyl-L-homoserine. The chain is Homoserine O-succinyltransferase from Burkholderia thailandensis (strain ATCC 700388 / DSM 13276 / CCUG 48851 / CIP 106301 / E264).